The chain runs to 319 residues: Extracellular phospholipase A1 (319 aa).

Residues 1-24 (MSMPLSFTSAVSPVAAIPTPRAAA) form the signal peptide.

It catalyses the reaction a 1,2-diacyl-sn-glycero-3-phosphocholine + H2O = a 2-acyl-sn-glycero-3-phosphocholine + a fatty acid + H(+). In Serratia liquefaciens, this protein is Extracellular phospholipase A1 (phlA).